An 86-amino-acid chain; its full sequence is Kappa-theraphotoxin-Cg1a 1 (86 aa).

The first 21 residues, 1 to 21 (MKVSVLITLAVLGVMFVWASA), serve as a signal peptide directing secretion. The propeptide occupies 22–50 (AELEERGSDQRDSPAWLKSMERIFQSGER). Cystine bridges form between Cys-52–Cys-66, Cys-59–Cys-71, and Cys-65–Cys-78. An involved in active face region spans residues 55–56 (MF). The residue at position 84 (Phe-84) is a Phenylalanine amide.

Belongs to the neurotoxin 10 (Hwtx-1) family. 28 (Jztx-11) subfamily. In terms of tissue distribution, expressed by the venom gland.

It is found in the secreted. Functionally, this toxin acts as a voltage-dependent gating-modifier. It inhibits the sodium conductance (IC(50)=124 nM) and slows the fast inactivation (EC(50)=1180 nM) of Nav1.5/SCN5A. It significantly shifts the activation to more depolarized voltages and decreases the deactivation of Nav1.5 currents upon extreme depolarization, but only slightly affects voltage-dependence of steady-state inactivation. In addition, this toxin causes an approximately five-fold decrease in the rate of recovery from inactivation and an approximately 1.9-fold reduction in the closed-state inactivation rate. This toxin integrates the functions of site 3 toxins (alpha-scorpion toxins) with site 4 toxins (beta-scorpion and spider toxins) by targeting multiple sites on Nav1.5. Also shows inhibition of voltage-gated potassium channels (5 uM completely inhibits Kv2.1/KCNB1, whereas 5 uM moderately inhibits Kv4.2/KCND2 Kv4.1/KCND1 channels). This chain is Kappa-theraphotoxin-Cg1a 1, found in Chilobrachys guangxiensis (Chinese earth tiger tarantula).